The sequence spans 154 residues: MKLNELSDCKGAIRNRKRVGRGIGSGTGKTGGRGVKGQRSRSGVSLNGFEGGQMPIYRRLPKRGFRNFFAKDYNEVSLGRIQSAIDTGKLNIEKPVDIIALKEAGIIRRVKDGVRLLSDGELKVKISFNVSYASKAARLKIEKAGGQVHFPETV.

The segment at 17 to 44 (KRVGRGIGSGTGKTGGRGVKGQRSRSGV) is disordered. Residues 21–35 (RGIGSGTGKTGGRGV) are compositionally biased toward gly residues.

This sequence belongs to the universal ribosomal protein uL15 family. In terms of assembly, part of the 50S ribosomal subunit.

Functionally, binds to the 23S rRNA. This Bartonella henselae (strain ATCC 49882 / DSM 28221 / CCUG 30454 / Houston 1) (Rochalimaea henselae) protein is Large ribosomal subunit protein uL15.